A 158-amino-acid polypeptide reads, in one-letter code: Ribosome maturation factor RimP (158 aa).

It belongs to the RimP family.

It localises to the cytoplasm. In terms of biological role, required for maturation of 30S ribosomal subunits. The protein is Ribosome maturation factor RimP of Streptococcus suis (strain 98HAH33).